Reading from the N-terminus, the 151-residue chain is Flagellar assembly factor FliW (151 aa).

It belongs to the FliW family. Interacts with translational regulator CsrA and flagellin(s).

The protein localises to the cytoplasm. Acts as an anti-CsrA protein, binds CsrA and prevents it from repressing translation of its target genes, one of which is flagellin. Binds to flagellin and participates in the assembly of the flagellum. In Lachnospira eligens (strain ATCC 27750 / DSM 3376 / VPI C15-48 / C15-B4) (Eubacterium eligens), this protein is Flagellar assembly factor FliW.